Here is a 242-residue protein sequence, read N- to C-terminus: Small ribosomal subunit protein uS5 (242 aa).

A compositionally biased stretch (polar residues) spans 1 to 14 (MADENSTGPGNQPE). Residues 1–65 (MADENSTGPG…DRRPRDEDGG (65 aa)) form a disordered region. Over residues 41 to 65 (DGGRGGRDGGRGRRDDRRPRDEDGG) the composition is skewed to basic and acidic residues. Residues 68–131 (LIEKLVHINR…AAAKKAMIRV (64 aa)) form the S5 DRBM domain. The interval 204 to 242 (EQTSPKSVAQRRGKKVSDLIKRGGASDRAAEAEAAAVTE) is disordered. A compositionally biased stretch (basic and acidic residues) spans 218–234 (KVSDLIKRGGASDRAAE).

This sequence belongs to the universal ribosomal protein uS5 family. In terms of assembly, part of the 30S ribosomal subunit. Contacts proteins S4 and S8.

With S4 and S12 plays an important role in translational accuracy. Functionally, located at the back of the 30S subunit body where it stabilizes the conformation of the head with respect to the body. This Sphingopyxis alaskensis (strain DSM 13593 / LMG 18877 / RB2256) (Sphingomonas alaskensis) protein is Small ribosomal subunit protein uS5.